Reading from the N-terminus, the 185-residue chain is UPF0301 protein HDEF_0602 (185 aa).

It belongs to the UPF0301 (AlgH) family.

This is UPF0301 protein HDEF_0602 from Hamiltonella defensa subsp. Acyrthosiphon pisum (strain 5AT).